Reading from the N-terminus, the 155-residue chain is 3-dehydroquinate dehydratase (155 aa).

Tyr-32 (proton acceptor) is an active-site residue. Asn-84, His-90, and Asp-97 together coordinate substrate. His-110 (proton donor) is an active-site residue. Substrate contacts are provided by residues 111–112 (LS) and Arg-121.

This sequence belongs to the type-II 3-dehydroquinase family. As to quaternary structure, homododecamer.

The catalysed reaction is 3-dehydroquinate = 3-dehydroshikimate + H2O. It functions in the pathway metabolic intermediate biosynthesis; chorismate biosynthesis; chorismate from D-erythrose 4-phosphate and phosphoenolpyruvate: step 3/7. Its function is as follows. Catalyzes a trans-dehydration via an enolate intermediate. The protein is 3-dehydroquinate dehydratase of Ralstonia pickettii (strain 12J).